The chain runs to 732 residues: MVDEMVLITQQWLNDTYSGKHGYNPVEESGKTGWDTIYGLTRALQIELGISEPADNFGPTTQRLFKPLKRQAPDSKPSNMNFILQGALWCKGFNPGGFTGVFYEKTENAVKEFQKAAGLTTQDGIVTTLIMKALLDMSAFKLVSGGDSRIRQIQQNLNRDYNDYIGLMPCDGLYGRDTNKALIYALQKEEGMSTSVANGFFGNGTTSLCPTLTPGDSRTGFVLIVQYALYCNGKSFDPGEFDGKYGVGVVSAVKAFQEFMCLPQTGYADMPTIKALLSSSGDTTRTASACDTATIITAEKAQTLRNNGYKTVGRYLTGNVRTSSGLTSKALTSKELAVILDAGLKVFPIYQDGGYESSYFVKDQGTRDAYSAASAARRLGFPSGTTIYFAVDFDAYDYEVTDKIIPYFQEIKSAFTKMQTFSTAPKYEIGVYGPRNICIRTSEAGLTKYSFVANMSTGFSGNLGYPMPNNWAFDQFYEGTIGSGSGSIGIDKDGYSGRDSGASNVNPPSDPVYDARLRTLTDILSTIPALENLTSLANAMFEFDTTETIFTSPELDIILSTSLLATIPSEGSPNTITITNGKPGAYITGLLGDTQTSLTASQIDSYQNLLNSLSLSVRNGYLEVYVNPTAESLNIQIKIYTPDIPVGDNVTTGLTTTITFKIKTYKGVPVTSPESELALDWPSYDQYLFPVVGVAALLLIGNMGSDLTNNKGVKVATALSAMLLAIFAYYTS.

2 helical membrane passes run tyrosine 687–leucine 707 and glycine 712–serine 732.

This sequence belongs to the FadG family.

Its subcellular location is the cell membrane. This is an uncharacterized protein from Bacillus subtilis (strain 168).